The primary structure comprises 195 residues: MPPRPRFDRRAPVRELPNINERIKYPQLRVVDSDGKQLGVIDRIKALEIANQRELDLVLVSEKANPPVCRIMDYGKYKFEQEKKAKEARKKSHQTEVKEVKMRYKIDKHDYDVRIGQAVRFLKAGDKVKCTVIFRGREIQHSNLAETLLLRMANDLEEQSEVQQRPKREGRNMIMFLSPRKTPLIKKEEDAKENN.

Residues 158–195 are disordered; it reads EQSEVQQRPKREGRNMIMFLSPRKTPLIKKEEDAKENN. The span at 185–195 shows a compositional bias: basic and acidic residues; it reads IKKEEDAKENN.

This sequence belongs to the IF-3 family. Monomer.

Its subcellular location is the cytoplasm. Its function is as follows. IF-3 binds to the 30S ribosomal subunit and shifts the equilibrium between 70S ribosomes and their 50S and 30S subunits in favor of the free subunits, thus enhancing the availability of 30S subunits on which protein synthesis initiation begins. The chain is Translation initiation factor IF-3 from Prochlorococcus marinus (strain MIT 9515).